We begin with the raw amino-acid sequence, 119 residues long: Evasin P983 (119 aa).

The first 21 residues, 1–21, serve as a signal peptide directing secretion; it reads MKASFCVIASCLVVFALKGTA. 4 disulfide bridges follow: C37/C59, C55/C97, C72/C102, and C92/C111. N48 and N67 each carry an N-linked (GlcNAc...) asparagine glycan.

Its subcellular location is the secreted. Functionally, salivary chemokine-binding protein which binds to host chemokines CCL2, CCL3 and CCL8. The chain is Evasin P983 from Amblyomma cajennense (Cayenne tick).